The primary structure comprises 122 residues: Small ribosomal subunit protein bS6 (122 aa).

This sequence belongs to the bacterial ribosomal protein bS6 family.

Binds together with bS18 to 16S ribosomal RNA. The protein is Small ribosomal subunit protein bS6 of Vibrio cholerae serotype O1 (strain ATCC 39541 / Classical Ogawa 395 / O395).